A 242-amino-acid polypeptide reads, in one-letter code: NAD(P)H-quinone oxidoreductase subunit K (242 aa).

Residues C59, C60, C124, and C155 each contribute to the [4Fe-4S] cluster site.

This sequence belongs to the complex I 20 kDa subunit family. As to quaternary structure, NDH-1 can be composed of about 15 different subunits; different subcomplexes with different compositions have been identified which probably have different functions. [4Fe-4S] cluster serves as cofactor.

Its subcellular location is the cellular thylakoid membrane. The enzyme catalyses a plastoquinone + NADH + (n+1) H(+)(in) = a plastoquinol + NAD(+) + n H(+)(out). The catalysed reaction is a plastoquinone + NADPH + (n+1) H(+)(in) = a plastoquinol + NADP(+) + n H(+)(out). Functionally, NDH-1 shuttles electrons from an unknown electron donor, via FMN and iron-sulfur (Fe-S) centers, to quinones in the respiratory and/or the photosynthetic chain. The immediate electron acceptor for the enzyme in this species is believed to be plastoquinone. Couples the redox reaction to proton translocation, and thus conserves the redox energy in a proton gradient. Cyanobacterial NDH-1 also plays a role in inorganic carbon-concentration. This Synechococcus sp. (strain RCC307) protein is NAD(P)H-quinone oxidoreductase subunit K.